A 1513-amino-acid polypeptide reads, in one-letter code: DNA polymerase alpha catalytic subunit (1513 aa).

Residues 235 to 254 are disordered; the sequence is STNQNANASDSKRVSNQTND. Residues Cys-1344, Cys-1347, Cys-1370, Cys-1373, Cys-1404, Cys-1409, Cys-1422, and Cys-1427 each coordinate Zn(2+). A CysA-type zinc finger spans residues 1344-1373; that stretch reads CPHCSESYHFPGIFQDGKNNTLSGLLCIKC. The CysB motif signature appears at 1404–1427; it reads CQEPACGAVSRQLLYNNKCINLAC.

Belongs to the DNA polymerase type-B family.

It localises to the nucleus. It carries out the reaction DNA(n) + a 2'-deoxyribonucleoside 5'-triphosphate = DNA(n+1) + diphosphate. In terms of biological role, polymerase alpha in a complex with DNA primase is a replicative polymerase. The sequence is that of DNA polymerase alpha catalytic subunit from Oxytricha trifallax (Sterkiella histriomuscorum).